Here is a 157-residue protein sequence, read N- to C-terminus: Probable succinate transporter subunit YjjB (157 aa).

Helical transmembrane passes span 2–22, 55–75, 87–107, and 129–149; these read GIIS…IPAV, AGFN…SIGI, IFTV…TAMI, and FLKA…PGLW.

It belongs to the ThrE exporter (TC 2.A.79) family. In terms of assembly, the transporter is composed of YjjB and YjjP.

The protein localises to the cell inner membrane. In terms of biological role, involved in succinate export with YjjP. Both proteins are required for export. In Klebsiella pneumoniae (strain 342), this protein is Probable succinate transporter subunit YjjB.